Reading from the N-terminus, the 362-residue chain is Phosphoserine aminotransferase (362 aa).

L-glutamate-binding residues include serine 9 and arginine 42. Pyridoxal 5'-phosphate contacts are provided by residues 76–77 (GR), tryptophan 102, threonine 153, aspartate 174, and glutamine 197. Lysine 198 is modified (N6-(pyridoxal phosphate)lysine). 239–240 (NT) contributes to the pyridoxal 5'-phosphate binding site.

Belongs to the class-V pyridoxal-phosphate-dependent aminotransferase family. SerC subfamily. In terms of assembly, homodimer. It depends on pyridoxal 5'-phosphate as a cofactor.

The protein localises to the cytoplasm. It catalyses the reaction O-phospho-L-serine + 2-oxoglutarate = 3-phosphooxypyruvate + L-glutamate. The catalysed reaction is 4-(phosphooxy)-L-threonine + 2-oxoglutarate = (R)-3-hydroxy-2-oxo-4-phosphooxybutanoate + L-glutamate. It functions in the pathway amino-acid biosynthesis; L-serine biosynthesis; L-serine from 3-phospho-D-glycerate: step 2/3. It participates in cofactor biosynthesis; pyridoxine 5'-phosphate biosynthesis; pyridoxine 5'-phosphate from D-erythrose 4-phosphate: step 3/5. Catalyzes the reversible conversion of 3-phosphohydroxypyruvate to phosphoserine and of 3-hydroxy-2-oxo-4-phosphonooxybutanoate to phosphohydroxythreonine. The protein is Phosphoserine aminotransferase of Escherichia coli O127:H6 (strain E2348/69 / EPEC).